A 489-amino-acid polypeptide reads, in one-letter code: L-asparagine permease (489 aa).

Helical transmembrane passes span 38–58 (HVNM…GAGG), 62–82 (DAGP…FFVV), 113–133 (VAGW…ITAI), 150–170 (VLAL…VKIF), 175–195 (FWFA…GIFL), 223–243 (VMPV…LELV), 268–288 (VALF…SSLY), 302–322 (IGVP…AMSS), 357–377 (YGGI…NYLV), 382–402 (FEIV…IIMI), 426–446 (SPVT…LMWN), and 452–472 (RKTV…WFGV).

This sequence belongs to the amino acid-polyamine-organocation (APC) superfamily. Amino acid transporter (AAT) (TC 2.A.3.1) family.

The protein localises to the cell membrane. The chain is L-asparagine permease (ansP) from Streptomyces coelicolor (strain ATCC BAA-471 / A3(2) / M145).